A 502-amino-acid chain; its full sequence is Probable cytosol aminopeptidase (502 aa).

2 residues coordinate Mn(2+): Lys-267 and Asp-272. Residue Lys-279 is part of the active site. 3 residues coordinate Mn(2+): Asp-290, Asp-349, and Glu-351. The active site involves Arg-353.

The protein belongs to the peptidase M17 family. Mn(2+) serves as cofactor.

Its subcellular location is the cytoplasm. The catalysed reaction is Release of an N-terminal amino acid, Xaa-|-Yaa-, in which Xaa is preferably Leu, but may be other amino acids including Pro although not Arg or Lys, and Yaa may be Pro. Amino acid amides and methyl esters are also readily hydrolyzed, but rates on arylamides are exceedingly low.. The enzyme catalyses Release of an N-terminal amino acid, preferentially leucine, but not glutamic or aspartic acids.. Functionally, presumably involved in the processing and regular turnover of intracellular proteins. Catalyzes the removal of unsubstituted N-terminal amino acids from various peptides. In Aeromonas salmonicida (strain A449), this protein is Probable cytosol aminopeptidase.